The chain runs to 164 residues: T-cell surface glycoprotein CD3 zeta chain (164 aa).

The N-terminal stretch at 1–21 (MKWKVSVLACILHVRFPGAEA) is a signal peptide. Gln22 is subject to Blocked amino end (Gln). Residues 22–30 (QSFGLLDPK) are Extracellular-facing. A helical membrane pass occupies residues 31–51 (LCYLLDGILFIYGVIITALYL). Residues 52 to 164 (RAKFSRSAET…ALHMQTLAPR (113 aa)) lie on the Cytoplasmic side of the membrane. Position 58 is a phosphoserine (Ser58). ITAM domains follow at residues 61-89 (TAAN…LEKK), 100-128 (QQRR…EIGT), and 131-159 (ERRR…LHMQ). Phosphotyrosine occurs at positions 72 and 83. Residues 87–96 (EKKRARDPEM) show a composition bias toward basic and acidic residues. A disordered region spans residues 87–111 (EKKRARDPEMGGKQQRRRNPQEGVY). Tyr111, Tyr123, Tyr142, and Tyr153 each carry phosphotyrosine. Positions 124-143 (SEIGTKGERRRGKGHDGLYQ) are disordered.

Belongs to the CD3Z/FCER1G family. The TCR-CD3 complex is composed of a CD3D/CD3E and a CD3G/CD3E heterodimers that preferentially associate with TCRalpha and TCRbeta, respectively, to form TCRalpha/CD3E/CD3G and TCRbeta/CD3G/CD3E trimers. In turn, the hexamer interacts with CD3Z homodimer to form the TCR-CD3 complex. Alternatively, TCRalpha and TCRbeta can be replaced by TCRgamma and TCRdelta. Interacts with SLA. Interacts with SLA2. Interacts with TRAT1. Interacts with DOCK2. Interacts with SHB. Interacts with ZAP70. Interacts (tyrosine phosphorylated) with SHC1 (via SH2 domain). Interacts with PTPRC. Interacts with CRK; this interaction regulates CD3Z phosphorylation. Interacts (on T cell side) with CD81, ICAM1 and CD9 at immunological synapses between antigen-presenting cells and T cells. Interacts with CD160. Interacts with LY6E. Interacts with LY6E. The signaling subunit of immunoglobulin gamma (IgG) Fc receptor complex. As a homodimer or a heterodimer with FCER1G, associates with the ligand binding subunit FCGR3A (via transmembrane domain); this interaction is a prerequisite for Fc receptor complex expression on the cell surface. Interacts with CD5. Phosphorylated on Tyr residues after T-cell receptor triggering by LCK in association with CD4/CD8. As to expression, CD3Z is expressed in normal lymphoid tissue and in peripheral blood mononuclear cells (PBMCs). Expressed also in retinal ganglion cells.

It localises to the cell membrane. Functionally, part of the TCR-CD3 complex present on T-lymphocyte cell surface that plays an essential role in adaptive immune response. When antigen presenting cells (APCs) activate T-cell receptor (TCR), TCR-mediated signals are transmitted across the cell membrane by the CD3 chains CD3D, CD3E, CD3G and CD3Z. All CD3 chains contain immunoreceptor tyrosine-based activation motifs (ITAMs) in their cytoplasmic domain. Upon TCR engagement, these motifs become phosphorylated by Src family protein tyrosine kinases LCK and FYN, resulting in the activation of downstream signaling pathways. CD3Z ITAMs phosphorylation creates multiple docking sites for the protein kinase ZAP70 leading to ZAP70 phosphorylation and its conversion into a catalytically active enzyme. Plays an important role in intrathymic T-cell differentiation. Additionally, participates in the activity-dependent synapse formation of retinal ganglion cells (RGCs) in both the retina and dorsal lateral geniculate nucleus (dLGN). In Mus musculus (Mouse), this protein is T-cell surface glycoprotein CD3 zeta chain (Cd247).